The following is a 146-amino-acid chain: Large ribosomal subunit protein uL15 (146 aa).

Residues M1–R13 are compositionally biased toward basic and acidic residues. The disordered stretch occupies residues M1–P56. Positions A23–Q35 are enriched in gly residues.

The protein belongs to the universal ribosomal protein uL15 family. In terms of assembly, part of the 50S ribosomal subunit.

In terms of biological role, binds to the 23S rRNA. This is Large ribosomal subunit protein uL15 from Staphylococcus epidermidis (strain ATCC 35984 / DSM 28319 / BCRC 17069 / CCUG 31568 / BM 3577 / RP62A).